Here is a 248-residue protein sequence, read N- to C-terminus: 3-deoxy-manno-octulosonate cytidylyltransferase (248 aa).

Belongs to the KdsB family.

The protein localises to the cytoplasm. The catalysed reaction is 3-deoxy-alpha-D-manno-oct-2-ulosonate + CTP = CMP-3-deoxy-beta-D-manno-octulosonate + diphosphate. It participates in nucleotide-sugar biosynthesis; CMP-3-deoxy-D-manno-octulosonate biosynthesis; CMP-3-deoxy-D-manno-octulosonate from 3-deoxy-D-manno-octulosonate and CTP: step 1/1. The protein operates within bacterial outer membrane biogenesis; lipopolysaccharide biosynthesis. Activates KDO (a required 8-carbon sugar) for incorporation into bacterial lipopolysaccharide in Gram-negative bacteria. In Chlorobium chlorochromatii (strain CaD3), this protein is 3-deoxy-manno-octulosonate cytidylyltransferase.